Reading from the N-terminus, the 241-residue chain is Transcription factor HEC1 (241 aa).

The 50-residue stretch at 128–177 (ISKDPQSVAARHRRERISERIRILQRLVPGGTKMDTASMLDEAIHYVKFL) folds into the bHLH domain.

Homodimer. Interacts with SPT. Interacts with BZIP30. As to expression, flowers, especially in gynoecium.

The protein localises to the nucleus. In terms of biological role, required for the female reproductive tract development and fertility. The protein is Transcription factor HEC1 (HEC1) of Arabidopsis thaliana (Mouse-ear cress).